The primary structure comprises 620 residues: Glutathione-regulated potassium-efflux system protein KefC (620 aa).

The next 12 membrane-spanning stretches (helical) occupy residues 4-24, 26-46, 54-74, 90-110, 114-134, 149-169, 178-198, 218-238, 270-290, 294-314, 327-347, and 359-379; these read HTLI…PIAV, LGLG…PWGL, SILH…GLEL, GALQ…LLGL, VAEL…MQAM, FAVL…IPLL, MGAF…VVLL, VFSA…EEVG, GLLL…GTLI, LRIV…LWLI, WFAV…GAAQ, and SLTL…VILN. Residues 399-518 form the RCK N-terminal domain; the sequence is QPRVIIAGFG…AGVEKPERET (120 aa). A disordered region spans residues 597 to 620; that stretch reads GWQGTEEGKHTGNMADEPETKPSS.

The protein belongs to the monovalent cation:proton antiporter 2 (CPA2) transporter (TC 2.A.37) family. KefC subfamily. In terms of assembly, homodimer. Interacts with the regulatory subunit KefF.

Its subcellular location is the cell inner membrane. Its function is as follows. Pore-forming subunit of a potassium efflux system that confers protection against electrophiles. Catalyzes K(+)/H(+) antiport. This chain is Glutathione-regulated potassium-efflux system protein KefC, found in Escherichia coli O45:K1 (strain S88 / ExPEC).